A 728-amino-acid chain; its full sequence is Catalase B (728 aa).

Residues His107 and Asn180 contribute to the active site. Tyr394 is a binding site for heme.

This sequence belongs to the catalase family. The cofactor is heme.

Its subcellular location is the secreted. It catalyses the reaction 2 H2O2 = O2 + 2 H2O. Functionally, occurs in almost all aerobically respiring organisms and serves to protect cells from the toxic effects of hydrogen peroxide. The protein is Catalase B (CATB) of Ajellomyces capsulatus (Darling's disease fungus).